The chain runs to 335 residues: Pro-cathepsin H (335 aa).

Positions 1-22 are cleaved as a signal peptide; it reads MWAVLSLLCAGAWLLGPPACGA. The propeptide occupies 23–97; it reads SNLAVSSFEK…DEIRHKYLWS (75 aa). 2 N-linked (GlcNAc...) asparagine glycosylation sites follow: Asn72 and Asn101. Intrachain disulfides connect Cys102–Cys327, Cys138–Cys181, Cys172–Cys214, and Cys272–Cys322. A propeptide spanning residues 107-115 is cleaved from the precursor; that stretch reads GNYLRGTGP. Residue Cys141 is part of the active site. N-linked (GlcNAc...) asparagine glycosylation is present at Asn230. Active-site residues include His281 and Asn301.

This sequence belongs to the peptidase C1 family. Composed of cathepsin H and mini chain; disulfide-linked. Cathepsin H may be split into heavy and light chain. All chains are held together by disulfide bonds.

It is found in the lysosome. It carries out the reaction Hydrolysis of proteins, acting as an aminopeptidase (notably, cleaving Arg-|-Xaa bonds) as well as an endopeptidase.. Functionally, important for the overall degradation of proteins in lysosomes. The chain is Pro-cathepsin H (CTSH) from Sus scrofa (Pig).